We begin with the raw amino-acid sequence, 342 residues long: Phenylalanine--tRNA ligase alpha subunit (342 aa).

Glutamate 257 serves as a coordination point for Mg(2+).

This sequence belongs to the class-II aminoacyl-tRNA synthetase family. Phe-tRNA synthetase alpha subunit type 1 subfamily. In terms of assembly, tetramer of two alpha and two beta subunits. Requires Mg(2+) as cofactor.

Its subcellular location is the cytoplasm. The enzyme catalyses tRNA(Phe) + L-phenylalanine + ATP = L-phenylalanyl-tRNA(Phe) + AMP + diphosphate + H(+). This chain is Phenylalanine--tRNA ligase alpha subunit, found in Chlamydia trachomatis serovar A (strain ATCC VR-571B / DSM 19440 / HAR-13).